Here is a 278-residue protein sequence, read N- to C-terminus: Dermonecrotic toxin Ls4SicTox-alphaIII1ii (278 aa).

Residue H5 is part of the active site. E25 and D27 together coordinate Mg(2+). The active-site Nucleophile is the H40. Residues C44 and C50 are joined by a disulfide bond. D84 lines the Mg(2+) pocket.

The protein belongs to the arthropod phospholipase D family. Class I subfamily. It depends on Mg(2+) as a cofactor. Expressed by the venom gland.

The protein resides in the secreted. The catalysed reaction is an N-(acyl)-sphingosylphosphocholine = an N-(acyl)-sphingosyl-1,3-cyclic phosphate + choline. It catalyses the reaction an N-(acyl)-sphingosylphosphoethanolamine = an N-(acyl)-sphingosyl-1,3-cyclic phosphate + ethanolamine. The enzyme catalyses a 1-acyl-sn-glycero-3-phosphocholine = a 1-acyl-sn-glycero-2,3-cyclic phosphate + choline. It carries out the reaction a 1-acyl-sn-glycero-3-phosphoethanolamine = a 1-acyl-sn-glycero-2,3-cyclic phosphate + ethanolamine. Functionally, dermonecrotic toxins cleave the phosphodiester linkage between the phosphate and headgroup of certain phospholipids (sphingolipid and lysolipid substrates), forming an alcohol (often choline) and a cyclic phosphate. This toxin acts on sphingomyelin (SM). It may also act on ceramide phosphoethanolamine (CPE), lysophosphatidylcholine (LPC) and lysophosphatidylethanolamine (LPE), but not on lysophosphatidylserine (LPS), and lysophosphatidylglycerol (LPG). It acts by transphosphatidylation, releasing exclusively cyclic phosphate products as second products. Induces dermonecrosis, hemolysis, increased vascular permeability, edema, inflammatory response, and platelet aggregation. This is Dermonecrotic toxin Ls4SicTox-alphaIII1ii from Loxosceles sp. (strain 4 GJB-2008) (Recluse spider).